We begin with the raw amino-acid sequence, 278 residues long: Large ribosomal subunit protein uL2 (278 aa).

A disordered region spans residues Asn-212–Gly-278. Residues Tyr-257–Gly-278 show a composition bias toward basic residues.

This sequence belongs to the universal ribosomal protein uL2 family. Part of the 50S ribosomal subunit. Forms a bridge to the 30S subunit in the 70S ribosome.

In terms of biological role, one of the primary rRNA binding proteins. Required for association of the 30S and 50S subunits to form the 70S ribosome, for tRNA binding and peptide bond formation. It has been suggested to have peptidyltransferase activity; this is somewhat controversial. Makes several contacts with the 16S rRNA in the 70S ribosome. This Helicobacter pylori (strain Shi470) protein is Large ribosomal subunit protein uL2.